A 434-amino-acid chain; its full sequence is MQVSVETTEGLGRRVNITVAADTIEQAVKSELVNVAKKVCIDGFRKGKVPMNIVAQRYGASVRQDVLGDLMQRNFVDAIIQEKINPVGAPNYVPGEYKTGEDFSYAVEFEVYPEVELMGLDTIEVEKPRVEVKDADVDTMLDTLQKQQADWKETTDAAGAEDRVTVDFTGTIDGEAFDGGKATDFVLAMGQGRMIPGFEEGVIGHKAGESFDISVTFPEDYHAENLKGKAAKFAVELKKVEQRELPELDEAFIKRFGVADVSLEGLRAEVRKNMERELKNAVRNRVKTQVIDGLLNANDIHVPAALVDGEIDVLKRQAAQRFGGNEKQALELPRELFEEQAKRRVKVGLLLGEVIRKHELKADEARVSALIEEMASAYEDPKEVIEFYGKNKELMDNMRNVALEEQAVEALLANSRVTEKETGFNELMNQPSAA.

The region spanning 161-246 (EDRVTVDFTG…LKKVEQRELP (86 aa)) is the PPIase FKBP-type domain.

The protein belongs to the FKBP-type PPIase family. Tig subfamily.

The protein resides in the cytoplasm. It catalyses the reaction [protein]-peptidylproline (omega=180) = [protein]-peptidylproline (omega=0). Functionally, involved in protein export. Acts as a chaperone by maintaining the newly synthesized protein in an open conformation. Functions as a peptidyl-prolyl cis-trans isomerase. In Sodalis glossinidius (strain morsitans), this protein is Trigger factor.